The sequence spans 1285 residues: Peroxisomal ATPase PEX1 (1285 aa).

The segment covering 344–353 (QQGKTKQSVM) has biased composition (polar residues). The interval 344–373 (QQGKTKQSVMSPEKEKHPLESPNHKQIGSD) is disordered. At Ser354 the chain carries Phosphoserine. Positions 355–373 (PEKEKHPLESPNHKQIGSD) are enriched in basic and acidic residues. Residues 601–608 (GGKGSGKS) and 883–890 (GPPGTGKT) each bind ATP. The segment covering 1142–1161 (NGTSSDLSSQCPSAPSSVTQ) has biased composition (polar residues). The segment at 1142–1162 (NGTSSDLSSQCPSAPSSVTQD) is disordered. 3 positions are modified to phosphoserine: Ser1183, Ser1211, and Ser1213. Residues 1262-1285 (FQNPKKRKNPSGTVFRPGQKVTLA) form a disordered region.

The protein belongs to the AAA ATPase family. As to quaternary structure, homooligomer; homooligomerizes in the cytosol, interaction with PEX6 promotes dissociation of the homooligomer. Interacts with PEX6; forming the PEX1-PEX6 AAA ATPase complex, which is composed of a heterohexamer formed by a trimer of PEX1-PEX6 dimers. Interacts indirectly with PEX26, via its interaction with PEX6.

It is found in the cytoplasm. Its subcellular location is the cytosol. It localises to the peroxisome membrane. It carries out the reaction ATP + H2O = ADP + phosphate + H(+). In terms of biological role, component of the PEX1-PEX6 AAA ATPase complex, a protein dislocase complex that mediates the ATP-dependent extraction of the PEX5 receptor from peroxisomal membranes, an essential step for PEX5 recycling. Specifically recognizes PEX5 monoubiquitinated at 'Cys-11', and pulls it out of the peroxisome lumen through the PEX2-PEX10-PEX12 retrotranslocation channel. Extraction by the PEX1-PEX6 AAA ATPase complex is accompanied by unfolding of the TPR repeats and release of bound cargo from PEX5. The protein is Peroxisomal ATPase PEX1 of Cricetulus griseus (Chinese hamster).